A 487-amino-acid polypeptide reads, in one-letter code: L-tartrate/succinate antiporter (487 aa).

Topologically, residues 1–9 (MKPSTEWWR) are periplasmic. The helical transmembrane segment at 10–30 (YLAPLAVIAIIALLPVPAGLE) threads the bilayer. The Cytoplasmic segment spans residues 31 to 32 (NH). A run of 2 helical transmembrane segments spans residues 33–53 (TWLY…EPVP) and 54–74 (GAVV…WLLF). Residues 75–92 (SPEQLAQPGFKFTAKSLS) lie on the Cytoplasmic side of the membrane. Residues 93-113 (WAVSGFSNSVIWLIFAAFMFG) form a helical membrane-spanning segment. Topologically, residues 114–136 (TGYEKTGLGRRIALILVKKMGHR) are periplasmic. A helical transmembrane segment spans residues 137–157 (TLFLGYAVMFSELILAPVTPS). Over 158-188 (NSARGAGIIYPIIRNLPPLYQSQPNDSSSRS) the chain is Cytoplasmic. A helical membrane pass occupies residues 189–209 (IGSYIMWMGIVADCVTSAIFL). The Periplasmic segment spans residues 210-235 (TAMAPNLLLIGLMKSASHATLSWGDW). Residues 236–256 (FLGMLPLSILLVLLVPWLAYV) form a helical membrane-spanning segment. At 257 to 291 (LYPPVLKSGDQVPRWAETELQAMGPLCSREKRMLG) the chain is on the cytoplasmic side. 2 helical membrane-spanning segments follow: residues 292-312 (LMVG…AAMV) and 313-333 (GYSV…DIVS). Residues 334-339 (NKAAWN) are Cytoplasmic-facing. The chain crosses the membrane as a helical span at residues 340–360 (VFFWLASLITLATGLNNTGFI). Residues 361–369 (SWFGKLLAG) lie on the Periplasmic side of the membrane. Residues 370–390 (SLSGYSPTMVMVALIVVFYLL) traverse the membrane as a helical segment. The Cytoplasmic segment spans residues 391-392 (RY). A helical transmembrane segment spans residues 393–413 (FFASATAYTSALAPMMIAAAL). The Periplasmic portion of the chain corresponds to 414-417 (AMPE). Residues 418–438 (IPLPVFCLMVGAAIGLGSILT) form a helical membrane-spanning segment. Residues 439-464 (PYATGPSPIYYGSGYLPTADYWRLGA) lie on the Cytoplasmic side of the membrane. A helical membrane pass occupies residues 465-485 (IFGLIFLVLLVITGLLWMPVV). Residues 486-487 (LL) lie on the Periplasmic side of the membrane.

This sequence belongs to the SLC13A/DASS transporter (TC 2.A.47) family. DIT1 subfamily.

It is found in the cell inner membrane. It catalyses the reaction (2R,3R)-tartrate(out) + succinate(in) = (2R,3R)-tartrate(in) + succinate(out). Its function is as follows. Catalyzes the uptake of tartrate in exchange for intracellular succinate. Essential for anaerobic L-tartrate fermentation. This chain is L-tartrate/succinate antiporter, found in Escherichia coli (strain K12).